Consider the following 933-residue polypeptide: Isoleucine--tRNA ligase (933 aa).

The 'HIGH' region motif lies at 57-67 (PYANGNIHVGH). Glu554 contacts L-isoleucyl-5'-AMP. The 'KMSKS' region motif lies at 595 to 599 (KMSKS). Residue Lys598 participates in ATP binding.

The protein belongs to the class-I aminoacyl-tRNA synthetase family. IleS type 1 subfamily. Monomer.

Its subcellular location is the cytoplasm. It catalyses the reaction tRNA(Ile) + L-isoleucine + ATP = L-isoleucyl-tRNA(Ile) + AMP + diphosphate. Catalyzes the attachment of isoleucine to tRNA(Ile). As IleRS can inadvertently accommodate and process structurally similar amino acids such as valine, to avoid such errors it has two additional distinct tRNA(Ile)-dependent editing activities. One activity is designated as 'pretransfer' editing and involves the hydrolysis of activated Val-AMP. The other activity is designated 'posttransfer' editing and involves deacylation of mischarged Val-tRNA(Ile). The sequence is that of Isoleucine--tRNA ligase from Streptococcus pyogenes serotype M1.